Consider the following 158-residue polypeptide: Transcription elongation factor GreA (158 aa).

Residues 45-72 (AEYHAAREQQSFIEGRIKQLEGELSHAE) are a coiled coil.

Belongs to the GreA/GreB family.

Functionally, necessary for efficient RNA polymerase transcription elongation past template-encoded arresting sites. The arresting sites in DNA have the property of trapping a certain fraction of elongating RNA polymerases that pass through, resulting in locked ternary complexes. Cleavage of the nascent transcript by cleavage factors such as GreA or GreB allows the resumption of elongation from the new 3'terminus. GreA releases sequences of 2 to 3 nucleotides. The polypeptide is Transcription elongation factor GreA (Xylella fastidiosa (strain M23)).